We begin with the raw amino-acid sequence, 99 residues long: Antitoxin VapB47 (99 aa).

It belongs to the phD/YefM antitoxin family.

Functionally, antitoxin component of a type II toxin-antitoxin (TA) system. The sequence is that of Antitoxin VapB47 (vapB47) from Mycobacterium tuberculosis (strain CDC 1551 / Oshkosh).